A 128-amino-acid polypeptide reads, in one-letter code: Mediator of RNA polymerase II transcription subunit 31-A (128 aa).

The protein belongs to the Mediator complex subunit 31 family. In terms of assembly, component of the Mediator complex.

It localises to the nucleus. Component of the Mediator complex, a coactivator involved in the regulated transcription of nearly all RNA polymerase II-dependent genes. Mediator functions as a bridge to convey information from gene-specific regulatory proteins to the basal RNA polymerase II transcription machinery. Mediator is recruited to promoters by direct interactions with regulatory proteins and serves as a scaffold for the assembly of a functional preinitiation complex with RNA polymerase II and the general transcription factors. In Xenopus laevis (African clawed frog), this protein is Mediator of RNA polymerase II transcription subunit 31-A (med31-a).